A 924-amino-acid chain; its full sequence is Nodulation receptor kinase (924 aa).

The first 29 residues, 1–29 (MMELRVICIIRLVVACVLCLCIFIRSASS), serve as a signal peptide directing secretion. Residues 361-382 (EVIQKMRKELLLQNQDNEALES) adopt a coiled-coil conformation. LRR repeat units lie at residues 406-428 (VITK…VTEM), 430-452 (KLQI…PPSS), 453-475 (LLIS…IISL), and 477-498 (HLNS…AKLN). The helical transmembrane segment at 520-540 (FMIGAITSGSILITLAVVILF) threads the bilayer. Positions 595-872 (EKYKTLIGEG…IVRELEDALI (278 aa)) constitute a Protein kinase domain. ATP is bound by residues 601-609 (IGEGGFGSV) and lysine 623. Aspartate 721 functions as the Proton acceptor in the catalytic mechanism.

It belongs to the protein kinase superfamily. Ser/Thr protein kinase family. In terms of processing, may be phosphorylated.

The protein localises to the membrane. It carries out the reaction L-seryl-[protein] + ATP = O-phospho-L-seryl-[protein] + ADP + H(+). The enzyme catalyses L-threonyl-[protein] + ATP = O-phospho-L-threonyl-[protein] + ADP + H(+). In terms of biological role, involved in the perception of symbiotic fungi and bacteria and required for the calcium spiking. Part of the perception/transduction system leading to nodulation or mycorrhizal infection. The sequence is that of Nodulation receptor kinase (NORK) from Pisum sativum (Garden pea).